Reading from the N-terminus, the 114-residue chain is Transmembrane protein 14C (114 aa).

The next 4 helical transmembrane spans lie at 8–28, 33–53, 63–83, and 89–109; these read LMPLHYFGFGYAALVATGGII, AGSVPSLAAGLFFGGLAGLGA, VWVFLATSGTLAGIMGMRFYN, and PAGLIAGASLLMVAKVGISLL.

The protein belongs to the TMEM14 family.

The protein localises to the mitochondrion membrane. Functionally, required for normal heme biosynthesis. The sequence is that of Transmembrane protein 14C (Tmem14c) from Mus musculus (Mouse).